Consider the following 286-residue polypeptide: Ribosomal RNA small subunit methyltransferase H (286 aa).

S-adenosyl-L-methionine is bound by residues 17–19 (AGH), Asp-36, Phe-63, Asp-84, and Gln-91.

Belongs to the methyltransferase superfamily. RsmH family.

Its subcellular location is the cytoplasm. It carries out the reaction cytidine(1402) in 16S rRNA + S-adenosyl-L-methionine = N(4)-methylcytidine(1402) in 16S rRNA + S-adenosyl-L-homocysteine + H(+). Functionally, specifically methylates the N4 position of cytidine in position 1402 (C1402) of 16S rRNA. The polypeptide is Ribosomal RNA small subunit methyltransferase H (Metamycoplasma arthritidis (strain 158L3-1) (Mycoplasma arthritidis)).